Here is a 321-residue protein sequence, read N- to C-terminus: Tetraacyldisaccharide 4'-kinase (321 aa).

Position 54–61 (serine 54–threonine 61) interacts with ATP.

The protein belongs to the LpxK family.

It catalyses the reaction a lipid A disaccharide + ATP = a lipid IVA + ADP + H(+). Its pathway is glycolipid biosynthesis; lipid IV(A) biosynthesis; lipid IV(A) from (3R)-3-hydroxytetradecanoyl-[acyl-carrier-protein] and UDP-N-acetyl-alpha-D-glucosamine: step 6/6. Transfers the gamma-phosphate of ATP to the 4'-position of a tetraacyldisaccharide 1-phosphate intermediate (termed DS-1-P) to form tetraacyldisaccharide 1,4'-bis-phosphate (lipid IVA). This is Tetraacyldisaccharide 4'-kinase from Rickettsia typhi (strain ATCC VR-144 / Wilmington).